We begin with the raw amino-acid sequence, 92 residues long: Small ribosomal subunit protein uS19 (92 aa).

Belongs to the universal ribosomal protein uS19 family.

Functionally, protein S19 forms a complex with S13 that binds strongly to the 16S ribosomal RNA. The polypeptide is Small ribosomal subunit protein uS19 (Bacillus licheniformis (strain ATCC 14580 / DSM 13 / JCM 2505 / CCUG 7422 / NBRC 12200 / NCIMB 9375 / NCTC 10341 / NRRL NRS-1264 / Gibson 46)).